A 96-amino-acid polypeptide reads, in one-letter code: Large ribosomal subunit protein eL14 (96 aa).

Belongs to the eukaryotic ribosomal protein eL14 family.

The polypeptide is Large ribosomal subunit protein eL14 (Metallosphaera sedula (strain ATCC 51363 / DSM 5348 / JCM 9185 / NBRC 15509 / TH2)).